The primary structure comprises 140 residues: uncharacterized protein (140 aa).

The segment at 80–115 (KNGTRRHALPSPLEGSFQPGRQIPPPQTPSTDPQTL) is disordered.

This is an uncharacterized protein from Homo sapiens (Human).